We begin with the raw amino-acid sequence, 222 residues long: Uracil-DNA glycosylase (222 aa).

Asp-61 functions as the Proton acceptor in the catalytic mechanism.

It belongs to the uracil-DNA glycosylase (UDG) superfamily. UNG family.

The protein resides in the cytoplasm. It carries out the reaction Hydrolyzes single-stranded DNA or mismatched double-stranded DNA and polynucleotides, releasing free uracil.. Its function is as follows. Excises uracil residues from the DNA which can arise as a result of misincorporation of dUMP residues by DNA polymerase or due to deamination of cytosine. In Aeromonas salmonicida (strain A449), this protein is Uracil-DNA glycosylase.